A 463-amino-acid polypeptide reads, in one-letter code: ATP synthase subunit beta (463 aa).

151 to 158 is a binding site for ATP; it reads GGAGVGKT.

This sequence belongs to the ATPase alpha/beta chains family. As to quaternary structure, F-type ATPases have 2 components, CF(1) - the catalytic core - and CF(0) - the membrane proton channel. CF(1) has five subunits: alpha(3), beta(3), gamma(1), delta(1), epsilon(1). CF(0) has three main subunits: a(1), b(2) and c(9-12). The alpha and beta chains form an alternating ring which encloses part of the gamma chain. CF(1) is attached to CF(0) by a central stalk formed by the gamma and epsilon chains, while a peripheral stalk is formed by the delta and b chains.

The protein localises to the cell membrane. It catalyses the reaction ATP + H2O + 4 H(+)(in) = ADP + phosphate + 5 H(+)(out). Its function is as follows. Produces ATP from ADP in the presence of a proton gradient across the membrane. The catalytic sites are hosted primarily by the beta subunits. The sequence is that of ATP synthase subunit beta from Clostridium botulinum (strain Okra / Type B1).